Here is a 327-residue protein sequence, read N- to C-terminus: Ferrochelatase (327 aa).

2 residues coordinate Fe cation: His-196 and Glu-277.

It belongs to the ferrochelatase family.

The protein resides in the cytoplasm. It catalyses the reaction heme b + 2 H(+) = protoporphyrin IX + Fe(2+). It functions in the pathway porphyrin-containing compound metabolism; protoheme biosynthesis; protoheme from protoporphyrin-IX: step 1/1. Its function is as follows. Catalyzes the ferrous insertion into protoporphyrin IX. The sequence is that of Ferrochelatase from Gloeobacter violaceus (strain ATCC 29082 / PCC 7421).